The sequence spans 664 residues: Chaperone protein DnaK (664 aa).

Position 201 is a phosphothreonine; by autocatalysis (Thr201). The segment covering 574–592 (LKEDASTEKIKEASEELSR) has biased composition (basic and acidic residues). Residues 574 to 664 (LKEDASTEKI…DVEIVDKPND (91 aa)) form a disordered region. Residues 600–617 (AMQSQSASAAPSSAANAQ) are compositionally biased toward low complexity. Over residues 639 to 649 (GNSTSASSNNE) the composition is skewed to polar residues.

It belongs to the heat shock protein 70 family.

Acts as a chaperone. In Chlamydia felis (strain Fe/C-56) (Chlamydophila felis), this protein is Chaperone protein DnaK.